Reading from the N-terminus, the 75-residue chain is Small ribosomal subunit protein bS18 (75 aa).

This sequence belongs to the bacterial ribosomal protein bS18 family. In terms of assembly, part of the 30S ribosomal subunit. Forms a tight heterodimer with protein bS6.

In terms of biological role, binds as a heterodimer with protein bS6 to the central domain of the 16S rRNA, where it helps stabilize the platform of the 30S subunit. This is Small ribosomal subunit protein bS18 from Colwellia psychrerythraea (strain 34H / ATCC BAA-681) (Vibrio psychroerythus).